A 242-amino-acid polypeptide reads, in one-letter code: MTTVTMRDMLQAGVHFGHQTRYWNPKMKPFIFGARNGVHIINLEHTVPMFNEALAFISNVASKKGKVLFVGTKRAAGEAIKESALSCDQYYVDHRWLGGMLTNWKTVRQSIKRLKELESQSVDGTFDKLTKKEALMRTRELEKLEKSLGGIKNMGGLPDVLFVIGADHEHIAIKEANNLGIPVVAVVDTNSAPDGVNYIVPGNDDAMRAIRLYTSSVAAAANSGRGQDLAVQAEQDGFVEAV.

The protein belongs to the universal ribosomal protein uS2 family.

The sequence is that of Small ribosomal subunit protein uS2 from Shewanella denitrificans (strain OS217 / ATCC BAA-1090 / DSM 15013).